A 251-amino-acid polypeptide reads, in one-letter code: Pyrroloquinoline-quinone synthase (251 aa).

The protein belongs to the PqqC family.

The enzyme catalyses 6-(2-amino-2-carboxyethyl)-7,8-dioxo-1,2,3,4,7,8-hexahydroquinoline-2,4-dicarboxylate + 3 O2 = pyrroloquinoline quinone + 2 H2O2 + 2 H2O + H(+). Its pathway is cofactor biosynthesis; pyrroloquinoline quinone biosynthesis. Ring cyclization and eight-electron oxidation of 3a-(2-amino-2-carboxyethyl)-4,5-dioxo-4,5,6,7,8,9-hexahydroquinoline-7,9-dicarboxylic-acid to PQQ. The protein is Pyrroloquinoline-quinone synthase of Pseudomonas putida (strain ATCC 700007 / DSM 6899 / JCM 31910 / BCRC 17059 / LMG 24140 / F1).